A 112-amino-acid polypeptide reads, in one-letter code: Nitrogenase iron-iron protein delta chain (112 aa).

In terms of assembly, hexamer of two alpha, two beta, and two delta chains. Iron-sulfur cluster serves as cofactor.

The catalysed reaction is N2 + 8 reduced [2Fe-2S]-[ferredoxin] + 16 ATP + 16 H2O = H2 + 8 oxidized [2Fe-2S]-[ferredoxin] + 2 NH4(+) + 16 ADP + 16 phosphate + 6 H(+). Functionally, the key enzymatic reactions in nitrogen fixation are catalyzed by the nitrogenase complex, which has 2 components: the iron protein (component 2) and a component 1 which is either a molybdenum-iron protein, a vanadium-iron, or an iron-iron protein. The protein is Nitrogenase iron-iron protein delta chain (anfG) of Azomonas macrocytogenes (Azotobacter macrocytogenes).